We begin with the raw amino-acid sequence, 570 residues long: Sulfite reductase [NADPH] hemoprotein beta-component (570 aa).

[4Fe-4S] cluster contacts are provided by cysteine 434, cysteine 440, cysteine 479, and cysteine 483. Cysteine 483 contacts siroheme.

Belongs to the nitrite and sulfite reductase 4Fe-4S domain family. As to quaternary structure, alpha(8)-beta(8). The alpha component is a flavoprotein, the beta component is a hemoprotein. Siroheme is required as a cofactor. It depends on [4Fe-4S] cluster as a cofactor.

The catalysed reaction is hydrogen sulfide + 3 NADP(+) + 3 H2O = sulfite + 3 NADPH + 4 H(+). The protein operates within sulfur metabolism; hydrogen sulfide biosynthesis; hydrogen sulfide from sulfite (NADPH route): step 1/1. Functionally, component of the sulfite reductase complex that catalyzes the 6-electron reduction of sulfite to sulfide. This is one of several activities required for the biosynthesis of L-cysteine from sulfate. In Salmonella gallinarum (strain 287/91 / NCTC 13346), this protein is Sulfite reductase [NADPH] hemoprotein beta-component.